A 991-amino-acid polypeptide reads, in one-letter code: 5'-3' exoribonuclease 2 (991 aa).

The Nuclear localization signal motif lies at 264–268; it reads TKKTK. The span at 404–418 shows a compositional bias: basic and acidic residues; that stretch reads RRNENYRRRQQRESN. Disordered stretches follow at residues 404–461, 547–582, and 872–991; these read RRNE…TQKI, SIESSTPVVHPIDTKVSNVGQKRKAPDSTEENENTD, and AERS…NGYY. Residues 433–452 are compositionally biased toward low complexity; that stretch reads SVETQSTEVVTSSKSTSVDT. Low complexity-rich tracts occupy residues 878 to 889 and 896 to 910; these read SRRNNGNSYRGG and RRSYQSQSYSSRQSY. Polar residues predominate over residues 926–938; it reads WSGNGNFPRSNAS. Residues 946 to 958 are compositionally biased toward gly residues; sequence EGYGGRSRGGGYS. The span at 980-991 shows a compositional bias: polar residues; that stretch reads ESYNNNNRNGYY.

This sequence belongs to the 5'-3' exonuclease family. XRN2/RAT1 subfamily. Interacts with din1/rai1; the interaction is direct, stabilizes dhp1 protein structure and may stimulate its exoribonuclease activity. The interaction also stimulates din1 pyrophosphohydrolase activity, probably by recruiting it to mRNA substrates.

It is found in the nucleus. Functionally, possesses 5'-&gt;3' exoribonuclease activity. Required for the processing of nuclear mRNA and rRNA precursors. May promote the termination of transcription by RNA polymerase II. Essential for vegetative cell growth and chromosome segregation. The sequence is that of 5'-3' exoribonuclease 2 (dhp1) from Schizosaccharomyces pombe (strain 972 / ATCC 24843) (Fission yeast).